The following is an 844-amino-acid chain: Meiosis-specific protein PAIR3 (844 aa).

Disordered regions lie at residues 41–389, 418–506, 532–604, and 616–669; these read TSSV…RERR, KLSS…RFSD, DDLF…QISI, and WLSD…EPEK. Residues 106–120 show a composition bias toward polar residues; that stretch reads QPDDNAIEQTGTFSF. Composition is skewed to basic and acidic residues over residues 122–134 and 145–164; these read TRREQDSHLDQLD and RQVESADKNKPNSEMLRMKL. 2 stretches are compositionally biased toward polar residues: residues 191-208 and 218-229; these read QPKSQIANGPSSGRQKVF and TPAQFNSQTANK. 2 stretches are compositionally biased toward basic and acidic residues: residues 256–270 and 324–363; these read RKKEPTGSTHQDKSG and AKVEPKKAHCSDRISHKTTQDDMERKVPSKYIPSEKKGEK. Composition is skewed to polar residues over residues 364 to 382 and 420 to 440; these read TNSFSSLSRTGKTAESCSR and SSPQLTSFKSKGKCSSISPQQ. Over residues 441–456 the composition is skewed to basic and acidic residues; the sequence is KENDNTHIPEASDRTA. Positions 459–473 are enriched in low complexity; that stretch reads NSFNSTPSPAANPSP. Residues 545-554 show a composition bias toward polar residues; sequence RSRSTSFTSD. Residues 616–640 show a composition bias toward basic and acidic residues; it reads WLSDVDSPDKSSIEHLGRKSHLKEG. Over residues 646–661 the composition is skewed to polar residues; it reads QLTSPTHFATSGTQET. Residues 731-765 adopt a coiled-coil conformation; it reads VNAGKSKRKRLESTFEEQQEKLRILHEKFKEEVNQ.

In terms of tissue distribution, expressed in pollen mother cells and the ovule tissues during meiosis.

It localises to the chromosome. It is found in the nucleus. Its function is as follows. Plays a crucial role in homologous chromosome pairing and synapsis in meiosis. Does not seem required for cytokinesis. Is essential for meiotic bouquet formation, homologous chromosome pairing and normal recombination, and synaptonemal complex (SC) assembly. Required for the proper association of PAIR2 with chromosomes. The sequence is that of Meiosis-specific protein PAIR3 from Oryza sativa subsp. japonica (Rice).